A 195-amino-acid polypeptide reads, in one-letter code: uncharacterized protein (195 aa).

The interval 86-158 (LPSEGGWTSG…PAPVSGEPPE (73 aa)) is disordered.

This is an uncharacterized protein from Homo sapiens (Human).